We begin with the raw amino-acid sequence, 148 residues long: Holo-[acyl-carrier-protein] synthase (148 aa).

D9 and E63 together coordinate Mg(2+).

Belongs to the P-Pant transferase superfamily. AcpS family. It depends on Mg(2+) as a cofactor.

It localises to the cytoplasm. The catalysed reaction is apo-[ACP] + CoA = holo-[ACP] + adenosine 3',5'-bisphosphate + H(+). In terms of biological role, transfers the 4'-phosphopantetheine moiety from coenzyme A to a Ser of acyl-carrier-protein. The protein is Holo-[acyl-carrier-protein] synthase of Burkholderia cenocepacia (strain HI2424).